Reading from the N-terminus, the 426-residue chain is Mothers against decapentaplegic homolog 7 (426 aa).

The tract at residues 14–42 (WRSRAPGGEDEEEGVGGGGGGGELRGEGA) is disordered. An N6-acetyllysine; alternate mark is found at lysine 64 and lysine 70. Residues lysine 64 and lysine 70 each participate in a glycyl lysine isopeptide (Lys-Gly) (interchain with G-Cter in ubiquitin); alternate cross-link. In terms of domain architecture, MH1 spans 64–207 (KAVRGAKGHH…LSRLCELESP (144 aa)). Over residues 67-76 (RGAKGHHHPH) the composition is skewed to basic residues. The interval 67-87 (RGAKGHHHPHPPTSGAGAAGG) is disordered. 4 residues coordinate Zn(2+): cysteine 125, cysteine 180, cysteine 192, and histidine 197. A PY-motif motif is present at residues 208–211 (PPPY). The interval 208 to 217 (PPPYSRYPMD) is important for interaction with SMURF2. Serine 249 carries the phosphoserine modification. The 166-residue stretch at 261–426 (WCVVAYWEEK…CWLEVIFNSR (166 aa)) folds into the MH2 domain.

The protein belongs to the dwarfin/SMAD family. Interacts with COPS5. Interacts with STAMBP. Interacts with PPP1R15A. Interacts with NEDD4L. Interacts with RNF111, AXIN1 and AXIN2. Interacts with ACVR1B, SMURF1, SMURF2 and TGFBR1; SMAD7 recruits SMURF1 and SMURF2 to the TGF-beta receptor and regulates its degradation. Interacts with WWP1. Interacts with PDPK1 (via PH domain). Ubiquitinated by WWP1. Interacts with TSC22D1/TSC-22; the interaction requires TGF-beta and the interaction is inhibited by TGFBR1. Phosphorylation on Ser-249 does not affect its stability, nuclear localization or inhibitory function in TGFB signaling; however it affects its ability to regulate transcription. Phosphorylated by PDPK1. Post-translationally, ubiquitinated by WWP1. Polyubiquitinated by RNF111, which is enhanced by AXIN1 and promotes proteasomal degradation. In response to TGF-beta, ubiquitinated by SMURF1; which promotes its degradation. Ubiquitinated by ARK2C, promoting proteasomal degradation, leading to enhance the BMP-Smad signaling. In terms of processing, acetylation prevents ubiquitination and degradation mediated by SMURF1. As to expression, ubiquitous in various organs, with higher levels in brain and kidney.

The protein resides in the nucleus. Its subcellular location is the cytoplasm. Functionally, antagonist of signaling by TGF-beta (transforming growth factor) type 1 receptor superfamily members; has been shown to inhibit TGF-beta (Transforming growth factor) and activin signaling by associating with their receptors thus preventing SMAD2 access. Functions as an adapter to recruit SMURF2 to the TGF-beta receptor complex. Also acts by recruiting the PPP1R15A-PP1 complex to TGFBR1, which promotes its dephosphorylation. Positively regulates PDPK1 kinase activity by stimulating its dissociation from the 14-3-3 protein YWHAQ which acts as a negative regulator. This Mus musculus (Mouse) protein is Mothers against decapentaplegic homolog 7 (Smad7).